Here is a 932-residue protein sequence, read N- to C-terminus: Lipoxygenase 2.2, chloroplastic (932 aa).

Positions 79–219 (MKATVSVHMK…CSPDKRTFFP (141 aa)) constitute a PLAT domain. The Lipoxygenase domain maps to 223 to 932 (SYIPSQTPKG…EMGIPNSISI (710 aa)). Residues 270-284 (PESKRPVLGGKEHPY) are compositionally biased toward basic and acidic residues. A disordered region spans residues 270–311 (PESKRPVLGGKEHPYPRRCRTGRPRSKTDPSSEEESHKKGEM). Residues 285 to 294 (PRRCRTGRPR) are compositionally biased toward basic residues. Residues 295 to 311 (SKTDPSSEEESHKKGEM) show a composition bias toward basic and acidic residues. Fe cation contacts are provided by His-588, His-593, His-778, Asn-782, and Ile-932.

This sequence belongs to the lipoxygenase family. The cofactor is Fe cation.

Its subcellular location is the plastid. The protein localises to the chloroplast. It carries out the reaction (9Z,12Z)-octadecadienoate + O2 = (13S)-hydroperoxy-(9Z,11E)-octadecadienoate. The catalysed reaction is (9Z,12Z,15Z)-octadecatrienoate + O2 = (13S)-hydroperoxy-(9Z,11E,15Z)-octadecatrienoate. It participates in lipid metabolism; oxylipin biosynthesis. Plant lipoxygenase may be involved in a number of diverse aspects of plant physiology including growth and development, pest resistance, and senescence or responses to wounding. This enzyme exhibits linoleate 13-lipoxygenase activity. The chain is Lipoxygenase 2.2, chloroplastic (LOX2.2) from Hordeum vulgare (Barley).